The primary structure comprises 493 residues: Ribose import ATP-binding protein RbsA (493 aa).

ABC transporter domains lie at 3-239 (IEMK…VGRE) and 246-493 (KRTP…TGGR). An ATP-binding site is contributed by 35–42 (GENGAGKS).

This sequence belongs to the ABC transporter superfamily. Ribose importer (TC 3.A.1.2.1) family. The complex is composed of an ATP-binding protein (RbsA), two transmembrane proteins (RbsC) and a solute-binding protein (RbsB).

The protein resides in the cell membrane. It carries out the reaction D-ribose(out) + ATP + H2O = D-ribose(in) + ADP + phosphate + H(+). Part of the ABC transporter complex RbsABC involved in ribose import. Responsible for energy coupling to the transport system. This chain is Ribose import ATP-binding protein RbsA, found in Bacillus subtilis (strain 168).